The chain runs to 86 residues: Large ribosomal subunit protein uL23 (86 aa).

It belongs to the universal ribosomal protein uL23 family. As to quaternary structure, part of the 50S ribosomal subunit. Contacts protein L29.

In terms of biological role, binds to 23S rRNA. One of the proteins that surrounds the polypeptide exit tunnel on the outside of the ribosome. The sequence is that of Large ribosomal subunit protein uL23 from Pyrococcus horikoshii (strain ATCC 700860 / DSM 12428 / JCM 9974 / NBRC 100139 / OT-3).